The primary structure comprises 483 residues: Phloretin 2'-O-glucosyltransferase (483 aa).

Residue His-15 is the Proton acceptor of the active site. His-15 lines the an anthocyanidin pocket. Asp-118 serves as the catalytic Charge relay. Thr-140, Ala-360, Gln-362, His-377, Trp-380, Asn-381, Ser-382, and Glu-385 together coordinate UDP-alpha-D-glucose. Ala-400 contacts an anthocyanidin. The UDP-alpha-D-glucose site is built by Glu-401 and Gln-402.

This sequence belongs to the UDP-glycosyltransferase family.

The enzyme catalyses phloretin + UDP-alpha-D-glucose = phlorizin + UDP + H(+). Its function is as follows. Glycosyltransferase that possesses phloretin 2'-O-glycosyltransferase activity. Converts phloretin to phlorizin (phloretin 2'-O-glucoside), a potent antioxidant. Is specific for phloretin and does not possess glycosyltransferase activity toward caffeic acid, catechin, chlorogenic acid, 2-coumaric acid, 3-coumaric acid, 4-coumaric acid, cyanidin, 3,4-dihydroxyhydrocinnamic acid, epicatechin, 3-hydroxybenzoic acid, naringenin, 3,4-dihydroxybenzoic acid, quercetin and rutin. Can glycosylate phloretin in the presence of UDP-glucose, UDP-xylose and UDP-galactose. In Malus domestica (Apple), this protein is Phloretin 2'-O-glucosyltransferase.